The sequence spans 142 residues: Galactose-6-phosphate isomerase subunit LacA 2 (142 aa).

This sequence belongs to the LacAB/RpiB family. Heteromultimeric protein consisting of LacA and LacB.

It carries out the reaction aldehydo-D-galactose 6-phosphate = keto-D-tagatose 6-phosphate. The protein operates within carbohydrate metabolism; D-galactose 6-phosphate degradation; D-tagatose 6-phosphate from D-galactose 6-phosphate: step 1/1. The chain is Galactose-6-phosphate isomerase subunit LacA 2 from Streptococcus pyogenes serotype M1.